The primary structure comprises 278 residues: Formyltetrahydrofolate deformylase (278 aa).

The 80-residue stretch at 6–85 folds into the ACT domain; the sequence is ILLTDCPDDK…RLIGTQRKRI (80 aa). Aspartate 223 is an active-site residue.

This sequence belongs to the PurU family.

The catalysed reaction is (6R)-10-formyltetrahydrofolate + H2O = (6S)-5,6,7,8-tetrahydrofolate + formate + H(+). Its pathway is purine metabolism; IMP biosynthesis via de novo pathway; formate from 10-formyl-5,6,7,8-tetrahydrofolate: step 1/1. In terms of biological role, catalyzes the hydrolysis of 10-formyltetrahydrofolate (formyl-FH4) to formate and tetrahydrofolate (FH4). This Haemophilus influenzae (strain ATCC 51907 / DSM 11121 / KW20 / Rd) protein is Formyltetrahydrofolate deformylase.